A 285-amino-acid polypeptide reads, in one-letter code: 33 kDa chaperonin (285 aa).

2 cysteine pairs are disulfide-bonded: C228/C230 and C261/C264.

This sequence belongs to the HSP33 family. Under oxidizing conditions two disulfide bonds are formed involving the reactive cysteines. Under reducing conditions zinc is bound to the reactive cysteines and the protein is inactive.

The protein resides in the cytoplasm. In terms of biological role, redox regulated molecular chaperone. Protects both thermally unfolding and oxidatively damaged proteins from irreversible aggregation. Plays an important role in the bacterial defense system toward oxidative stress. The protein is 33 kDa chaperonin of Hahella chejuensis (strain KCTC 2396).